A 432-amino-acid polypeptide reads, in one-letter code: Gamma-glutamyl phosphate reductase (432 aa).

It belongs to the gamma-glutamyl phosphate reductase family.

Its subcellular location is the cytoplasm. It catalyses the reaction L-glutamate 5-semialdehyde + phosphate + NADP(+) = L-glutamyl 5-phosphate + NADPH + H(+). Its pathway is amino-acid biosynthesis; L-proline biosynthesis; L-glutamate 5-semialdehyde from L-glutamate: step 2/2. In terms of biological role, catalyzes the NADPH-dependent reduction of L-glutamate 5-phosphate into L-glutamate 5-semialdehyde and phosphate. The product spontaneously undergoes cyclization to form 1-pyrroline-5-carboxylate. This is Gamma-glutamyl phosphate reductase from Methylorubrum extorquens (strain PA1) (Methylobacterium extorquens).